A 122-amino-acid chain; its full sequence is Small ribosomal subunit protein uS13 (122 aa).

The tract at residues 94-122 is disordered; sequence SLPVRGQRTKTNARTRKVHVSRSKNSRGK.

Belongs to the universal ribosomal protein uS13 family. Part of the 30S ribosomal subunit. Forms a loose heterodimer with protein S19. Forms two bridges to the 50S subunit in the 70S ribosome.

Its function is as follows. Located at the top of the head of the 30S subunit, it contacts several helices of the 16S rRNA. In the 70S ribosome it contacts the 23S rRNA (bridge B1a) and protein L5 of the 50S subunit (bridge B1b), connecting the 2 subunits; these bridges are implicated in subunit movement. Contacts the tRNAs in the A and P-sites. This is Small ribosomal subunit protein uS13 from Haemophilus influenzae (strain ATCC 51907 / DSM 11121 / KW20 / Rd).